A 1050-amino-acid polypeptide reads, in one-letter code: Self-sufficient cytochrome P450 monooxygenase CYP505E3 (1050 aa).

Cys-406 serves as a coordination point for heme. Positions 459–481 (RGQSATGLSQGSMSASGATSSVA) are enriched in polar residues. The disordered stretch occupies residues 459–495 (RGQSATGLSQGSMSASGATSSVASPGPPAATGAQSNP). The 141-residue stretch at 501–641 (ISFFYGSNSG…DLELWEETNL (141 aa)) folds into the Flavodoxin-like domain. Residues 507-511 (SNSGT) and 585-617 (VFGC…TRLT) contribute to the FMN site. Residues 679–907 (RGLVEAKVTA…RPAKDAFHLP (229 aa)) form the FAD-binding FR-type domain.

The protein in the N-terminal section; belongs to the cytochrome P450 family. Requires FAD as cofactor. The cofactor is FMN. Heme is required as a cofactor.

It carries out the reaction 2 oxidized [cytochrome P450] + NADPH = 2 reduced [cytochrome P450] + NADP(+) + H(+). The enzyme catalyses an organic molecule + reduced [NADPH--hemoprotein reductase] + O2 = an alcohol + oxidized [NADPH--hemoprotein reductase] + H2O + H(+). It catalyses the reaction decane + reduced [NADPH--hemoprotein reductase] + O2 = 3-decanol + oxidized [NADPH--hemoprotein reductase] + H2O + H(+). The catalysed reaction is dodecane + reduced [NADPH--hemoprotein reductase] + O2 = 5-dodecanol + oxidized [NADPH--hemoprotein reductase] + H2O + H(+). It carries out the reaction tetradecane + reduced [NADPH--hemoprotein reductase] + O2 = 7-tetradecanol + oxidized [NADPH--hemoprotein reductase] + H2O + H(+). The enzyme catalyses hexadecane + reduced [NADPH--hemoprotein reductase] + O2 = 9-hexadecanol + oxidized [NADPH--hemoprotein reductase] + H2O + H(+). It catalyses the reaction dodecanoate + reduced [NADPH--hemoprotein reductase] + O2 = 5-hydroxydodecanoate + oxidized [NADPH--hemoprotein reductase] + H2O + H(+). The catalysed reaction is tetradecanoate + reduced [NADPH--hemoprotein reductase] + O2 = 7-hydroxytetradecanoate + oxidized [NADPH--hemoprotein reductase] + H2O + H(+). It carries out the reaction hexadecanoate + reduced [NADPH--hemoprotein reductase] + O2 = 9-hydroxyhexadecanoate + oxidized [NADPH--hemoprotein reductase] + H2O + H(+). The enzyme catalyses decan-1-ol + reduced [NADPH--hemoprotein reductase] + O2 = 1,3-decanediol + oxidized [NADPH--hemoprotein reductase] + H2O + H(+). It catalyses the reaction decan-1-ol + reduced [NADPH--hemoprotein reductase] + O2 = 1,7-decanediol + oxidized [NADPH--hemoprotein reductase] + H2O + H(+). The catalysed reaction is dodecan-1-ol + reduced [NADPH--hemoprotein reductase] + O2 = 1,5-dodecanediol + oxidized [NADPH--hemoprotein reductase] + H2O + H(+). It carries out the reaction dodecan-1-ol + reduced [NADPH--hemoprotein reductase] + O2 = 1,4-dodecanediol + oxidized [NADPH--hemoprotein reductase] + H2O + H(+). The enzyme catalyses dodecan-1-ol + reduced [NADPH--hemoprotein reductase] + O2 = 1,6-dodecanediol + oxidized [NADPH--hemoprotein reductase] + H2O + H(+). Its function is as follows. Self-sufficient cytochrome P450 monooxygenase that catalyzes the regioselective in-chain hydroxylation of alkanes, fatty alcohols, and fatty acids at the omega-7 position. Performs hydroxylation of C10-C16 n-alkanes and C12 and C14 fatty alcohols; and thereby enables the one step biocatalytic synthesis of rare alcohols such as 5-dodecanol and 7-tetradecanol. Converts 1-dodecanol into 1,5-dodecanediol as major product with very little sub-terminally hydroxylated products with the 1,4-dodecanediol and 1,6-dodecanediol more abundant. Does not use hexadecanediol nor decanoic acid as substrates. Converts dodecanoic acid to 5-hydroxydodecanoic acid which can be further converted into delta-dodecalactone by lactonization of the 5-hydroxy acid at low pH. Also gives sub-terminal hydroxylation of dodecanoic acid with 9-hydroxydodecanoic acid being the second most abundant product. The C14 and C16 fatty acids are double hydroxylated to yield dihydroxy acids hydroxylated at both the omega-7 position and a sub-terminal position (omega-1, omega-2, or omega-3). This chain is Self-sufficient cytochrome P450 monooxygenase CYP505E3, found in Aspergillus terreus (strain NIH 2624 / FGSC A1156).